The sequence spans 124 residues: Holo-[acyl-carrier-protein] synthase (124 aa).

Asp7 and Glu55 together coordinate Mg(2+).

The protein belongs to the P-Pant transferase superfamily. AcpS family. Requires Mg(2+) as cofactor.

The protein localises to the cytoplasm. It catalyses the reaction apo-[ACP] + CoA = holo-[ACP] + adenosine 3',5'-bisphosphate + H(+). Its function is as follows. Transfers the 4'-phosphopantetheine moiety from coenzyme A to a Ser of acyl-carrier-protein. This is Holo-[acyl-carrier-protein] synthase from Borreliella afzelii (strain PKo) (Borrelia afzelii).